The primary structure comprises 436 residues: 3-ketoacyl-CoA thiolase (436 aa).

C99 acts as the Acyl-thioester intermediate in catalysis. Catalysis depends on proton acceptor residues H392 and C422.

It belongs to the thiolase-like superfamily. Thiolase family. Heterotetramer of two alpha chains (FadJ) and two beta chains (FadI).

The protein resides in the cytoplasm. The enzyme catalyses an acyl-CoA + acetyl-CoA = a 3-oxoacyl-CoA + CoA. The protein operates within lipid metabolism; fatty acid beta-oxidation. Functionally, catalyzes the final step of fatty acid oxidation in which acetyl-CoA is released and the CoA ester of a fatty acid two carbons shorter is formed. This chain is 3-ketoacyl-CoA thiolase, found in Shewanella woodyi (strain ATCC 51908 / MS32).